The chain runs to 485 residues: MNEPTQITDTKKRYAAGVLKYAQMGYWNGDYVPKDTDILALFRITPQDGVDPIEAAAAVAGESSTATWTVVWTDRLTACDMYRAKAYKVEPVPNNPGQYFCYVAYDLSLFEEGSIANVTASIIGNVFSFKPLKAARLEDMKFPVSYVKTFAGPPTGIVVERERLDKFGRPLLGATTKPKLGLSGRNYGRVVYEGLKGGLDFMKDDENINSQPFMHWRDRFLFVMDAVNKASAATGEVKGSYLNVTAGTMEEMYRRAEFAKELGSVIIMIDLVVGYTAIQSMSNWARQNDMVLHMHRAGHGTYTRQKNHGVSFRVIAKWLRMAGVDHLHTGTAVGKLEGDPLTVQGYYNVCRDTHTKVDLPRGIFFDQDWGALKKVMPVASGGIHAGQMHQLIDLFGDDVVLQFGGGTIGHPQGIQAGATANRVALEAMVLARNEGRDIKNEGPQILRDAAKSCTPLAAALDTWGDITFNYTSTDTSDYVPTPSVA.

Substrate-binding residues include Asn-125 and Thr-175. The active-site Proton acceptor is the Lys-177. Position 179 (Lys-179) interacts with substrate. The Mg(2+) site is built by Lys-203, Asp-205, and Glu-206. Position 203 is an N6-carboxylysine (Lys-203). The active-site Proton acceptor is His-295. Substrate contacts are provided by Arg-296, His-328, and Ser-380.

This sequence belongs to the RuBisCO large chain family. Type I subfamily. Heterohexadecamer of 8 large chains and 8 small chains. Mg(2+) is required as a cofactor.

It carries out the reaction 2 (2R)-3-phosphoglycerate + 2 H(+) = D-ribulose 1,5-bisphosphate + CO2 + H2O. It catalyses the reaction D-ribulose 1,5-bisphosphate + O2 = 2-phosphoglycolate + (2R)-3-phosphoglycerate + 2 H(+). Its function is as follows. RuBisCO catalyzes two reactions: the carboxylation of D-ribulose 1,5-bisphosphate, the primary event in carbon dioxide fixation, as well as the oxidative fragmentation of the pentose substrate. Both reactions occur simultaneously and in competition at the same active site. The chain is Ribulose bisphosphate carboxylase large chain 2 from Methylibium petroleiphilum (strain ATCC BAA-1232 / LMG 22953 / PM1).